The primary structure comprises 291 residues: tRNA N(3)-cytidine methyltransferase METTL8, mitochondrial (291 aa).

The N-terminal 21 residues, methionine 1–tyrosine 21, are a transit peptide targeting the mitochondrion. Lysine 80 participates in a covalent cross-link: Glycyl lysine isopeptide (Lys-Gly) (interchain with G-Cter in SUMO). The S-adenosyl-L-methionine site is built by tryptophan 89 and tyrosine 93. The segment at phenylalanine 141–glutamate 187 is disordered. The span at serine 159 to lysine 168 shows a compositional bias: low complexity. Positions 204, 230, and 256 each coordinate S-adenosyl-L-methionine.

Belongs to the methyltransferase superfamily. METL family. In terms of assembly, interacts with EP300.

It localises to the mitochondrion. It carries out the reaction cytidine(32) in tRNA(Ser) + S-adenosyl-L-methionine = N(3)-methylcytidine(32) in tRNA(Ser) + S-adenosyl-L-homocysteine + H(+). The catalysed reaction is cytidine(32) in tRNA(Thr) + S-adenosyl-L-methionine = N(3)-methylcytidine(32) in tRNA(Thr) + S-adenosyl-L-homocysteine + H(+). The enzyme catalyses a cytidine in mRNA + S-adenosyl-L-methionine = an N(3)-methylcytidine in mRNA + S-adenosyl-L-homocysteine + H(+). Mitochondrial S-adenosyl-L-methionine-dependent methyltransferase that mediates N(3)-methylcytidine modification of residue 32 of the tRNA anticodon loop of mitochondrial tRNA(Ser)(UCN) and tRNA(Thr). N(3)-methylcytidine methylation modification regulates mitochondrial translation efficiency and is required for activity of the respiratory chain. N(3)-methylcytidine methylation of mitochondrial tRNA(Ser)(UCN) requires the formation of N(6)-dimethylallyladenosine(37) (i6A37) by TRIT1 as prerequisite. May also mediate N(3)-methylcytidine modification of mRNAs. The existence of N(3)-methylcytidine modification on mRNAs is however unclear, and additional evidences are required to confirm the role of the N(3)-methylcytidine-specific mRNA methyltransferase activity of METTL8 in vivo. This is tRNA N(3)-cytidine methyltransferase METTL8, mitochondrial from Homo sapiens (Human).